A 68-amino-acid chain; its full sequence is MRLLILFLAVVTLLSLAGPGSAEVRRRRRRPPCEDVNGQCQPRGNPCLRLRGACPRGSRCCMPTVAAH.

Residues M1 to V24 form the signal peptide. Disulfide bonds link C33–C60, C40–C54, and C47–C61.

As to expression, highly expressed in intestine, liver and spleen and expressed at lower levels in brain, kidney, lung, testis and venom gland.

The protein resides in the secreted. Its function is as follows. Potent antimicrobial peptide that displays activity against S.aureus and P.aeruginosa. Does not inhibit growth of E.coli. This is Venom-like beta-defensin from Ornithorhynchus anatinus (Duckbill platypus).